A 360-amino-acid polypeptide reads, in one-letter code: DNA replication and repair protein RecF (360 aa).

Residue 33–40 (GENGSGKT) participates in ATP binding.

This sequence belongs to the RecF family.

The protein localises to the cytoplasm. Functionally, the RecF protein is involved in DNA metabolism; it is required for DNA replication and normal SOS inducibility. RecF binds preferentially to single-stranded, linear DNA. It also seems to bind ATP. The sequence is that of DNA replication and repair protein RecF from Rickettsia rickettsii (strain Iowa).